A 526-amino-acid polypeptide reads, in one-letter code: Exodeoxyribonuclease 7 large subunit (526 aa).

Residues 499-526 (AGEDGTPSQAPKKRPARAGEPTKQGSLF) form a disordered region.

This sequence belongs to the XseA family. As to quaternary structure, heterooligomer composed of large and small subunits.

The protein localises to the cytoplasm. It catalyses the reaction Exonucleolytic cleavage in either 5'- to 3'- or 3'- to 5'-direction to yield nucleoside 5'-phosphates.. In terms of biological role, bidirectionally degrades single-stranded DNA into large acid-insoluble oligonucleotides, which are then degraded further into small acid-soluble oligonucleotides. The chain is Exodeoxyribonuclease 7 large subunit from Sinorhizobium medicae (strain WSM419) (Ensifer medicae).